Reading from the N-terminus, the 904-residue chain is Phosphatidate phosphatase PAH1 (904 aa).

The interval 1–112 is N-LIP; that stretch reads MSLVGRVGSL…SGSENNNGNQ (112 aa). Disordered stretches follow at residues 254–293, 305–326, 440–470, 574–595, and 612–655; these read EESS…HDAE, ELTK…EDRN, GIIE…DRKT, VEEN…SSSG, and EHTG…QLVR. Basic and acidic residues-rich tracts occupy residues 265-293, 311-326, and 449-470; these read DKVD…HDAE, ENVK…EDRN, and SERV…DRKT. The span at 631 to 642 shows a compositional bias: polar residues; sequence GLQNSPETQSTT. Residues 703 to 857 are C-LIP; that stretch reads IVISDVDGTI…FIINPKGEVA (155 aa). The short motif at 707-711 is the DXDXT motif element; sequence DVDGT.

The protein belongs to the lipin family. Mg(2+) serves as cofactor. In terms of tissue distribution, expressed in roots, leaves, stems, flowers, siliques, embryos and mature seeds.

The protein localises to the cytoplasm. It is found in the cytosol. It carries out the reaction a 1,2-diacyl-sn-glycero-3-phosphate + H2O = a 1,2-diacyl-sn-glycerol + phosphate. In terms of biological role, magnesium-dependent phosphatidate phosphatase which catalyzes the dephosphorylation of phosphatidate to yield diacylglycerol. Acts redundantly with PAH2 to repress phospholipid biosynthesis at the endoplasmic reticulum (ER). May function indirectly as repressor of multiple enzymes involved in phospholipid biosynthesis. Is involved in the pathway of galactolipid synthesis in the ER, which is required for the membrane lipid remodeling, an essential adaptation mechanism to cope with phosphate starvation. The protein is Phosphatidate phosphatase PAH1 (PAH1) of Arabidopsis thaliana (Mouse-ear cress).